The primary structure comprises 277 residues: Release factor glutamine methyltransferase (277 aa).

S-adenosyl-L-methionine-binding positions include 117-121, Asp-140, Trp-168, and Asn-183; that span reads GTGTG. Residue 183–186 participates in substrate binding; that stretch reads NPPY.

It belongs to the protein N5-glutamine methyltransferase family. PrmC subfamily.

The enzyme catalyses L-glutaminyl-[peptide chain release factor] + S-adenosyl-L-methionine = N(5)-methyl-L-glutaminyl-[peptide chain release factor] + S-adenosyl-L-homocysteine + H(+). Methylates the class 1 translation termination release factors RF1/PrfA and RF2/PrfB on the glutamine residue of the universally conserved GGQ motif. The sequence is that of Release factor glutamine methyltransferase from Salmonella typhimurium (strain LT2 / SGSC1412 / ATCC 700720).